Consider the following 165-residue polypeptide: Phosphopantetheine adenylyltransferase (165 aa).

A substrate-binding site is contributed by Ser-11. ATP contacts are provided by residues 11–12 (SF) and His-19. Substrate contacts are provided by Lys-43, Thr-76, and Arg-90. Residues 91-93 (GIR), Glu-101, and 126-132 (FSFISSS) contribute to the ATP site.

Belongs to the bacterial CoaD family. In terms of assembly, homohexamer. Requires Mg(2+) as cofactor.

It localises to the cytoplasm. The catalysed reaction is (R)-4'-phosphopantetheine + ATP + H(+) = 3'-dephospho-CoA + diphosphate. Its pathway is cofactor biosynthesis; coenzyme A biosynthesis; CoA from (R)-pantothenate: step 4/5. Its function is as follows. Reversibly transfers an adenylyl group from ATP to 4'-phosphopantetheine, yielding dephospho-CoA (dPCoA) and pyrophosphate. This is Phosphopantetheine adenylyltransferase from Latilactobacillus sakei subsp. sakei (strain 23K) (Lactobacillus sakei subsp. sakei).